We begin with the raw amino-acid sequence, 159 residues long: MNITIISVGKIKEKYLSDAINEYSKRISRYSKIDIIEVADEKTPENPSEVEKSKILEKEAERILKYLKKDSFLITLEILGKELTSESLAKKINDLSISGKSDITFIIGGSLGLSKNISEISDFKLSFSKMTFPHQLMRVILLEQVYRSFRIINGEPYHK.

Residues leucine 76, glycine 108, and 127 to 132 (FSKMTF) each bind S-adenosyl-L-methionine.

This sequence belongs to the RNA methyltransferase RlmH family.

It is found in the cytoplasm. It catalyses the reaction pseudouridine(1915) in 23S rRNA + S-adenosyl-L-methionine = N(3)-methylpseudouridine(1915) in 23S rRNA + S-adenosyl-L-homocysteine + H(+). In terms of biological role, specifically methylates the pseudouridine at position 1915 (m3Psi1915) in 23S rRNA. In Methanococcus maripaludis (strain C7 / ATCC BAA-1331), this protein is Putative ribosomal RNA large subunit methyltransferase H.